Reading from the N-terminus, the 326-residue chain is Archaeal actin homolog (326 aa).

ATP contacts are provided by residues 10-14 (YGDTK), serine 179, glutamine 231, 285-288 (GGAN), and glutamine 311.

The protein belongs to the thermophilic archaeal actin family.

Its function is as follows. Polymerizes into bundles of filaments. Polymerization requires NTP and is optimal with ATP, but GTP, UTP, CTP, and even the deoxy form of NTP can also support the polymerization reaction. This chain is Archaeal actin homolog, found in Thermoplasma volcanium (strain ATCC 51530 / DSM 4299 / JCM 9571 / NBRC 15438 / GSS1).